Here is a 324-residue protein sequence, read N- to C-terminus: MRILFIVDPLSTFKIYKDSTFAMMREAAARGYAIYTCQQSQLTLSGNVVETVATPLALTGDEHDWYRSGDPRLLPLTGFDAVLMRKDPPFDMEYVTSTWLLEIAERQGARVFNKPQAIRDHSEKLAIAQFREFTAPTIVTRDAKRLREFHAEQGDVIFKPLDGMGGAGIFRVGADGMNLGSVIETLTHNGTRTVMAQQYIPAIRDGDKRILLIGGSPVPHALARVPMAGEVRGNLAAGGTGRAQLLSERDQVIAHALAPVLWQRGLLLVGLDVIGDYLTEVNVTSPTCFQEITQQTGFNVAGMFIDALERAAGKASGGLGRKLA.

Residues 124-309 (KLAIAQFREF…VAGMFIDALE (186 aa)) enclose the ATP-grasp domain. An ATP-binding site is contributed by 150 to 206 (HAEQGDVIFKPLDGMGGAGIFRVGADGMNLGSVIETLTHNGTRTVMAQQYIPAIRDG). Residues E280 and N282 each coordinate Mg(2+).

Belongs to the prokaryotic GSH synthase family. It depends on Mg(2+) as a cofactor. Mn(2+) serves as cofactor.

It catalyses the reaction gamma-L-glutamyl-L-cysteine + glycine + ATP = glutathione + ADP + phosphate + H(+). It participates in sulfur metabolism; glutathione biosynthesis; glutathione from L-cysteine and L-glutamate: step 2/2. The sequence is that of Glutathione synthetase from Ralstonia nicotianae (strain ATCC BAA-1114 / GMI1000) (Ralstonia solanacearum).